Consider the following 132-residue polypeptide: Large ribosomal subunit protein uL14 (132 aa).

The protein belongs to the universal ribosomal protein uL14 family. As to quaternary structure, part of the 50S ribosomal subunit. Forms a cluster with proteins L3 and L24e, part of which may contact the 16S rRNA in 2 intersubunit bridges.

In terms of biological role, binds to 23S rRNA. Forms part of two intersubunit bridges in the 70S ribosome. The protein is Large ribosomal subunit protein uL14 of Methanospirillum hungatei JF-1 (strain ATCC 27890 / DSM 864 / NBRC 100397 / JF-1).